The sequence spans 308 residues: Apolipoprotein E (308 aa).

The signal sequence occupies residues 1-18; it reads MKFLWAALVVTLLAGCRA. 8 consecutive repeat copies span residues 75–96, 97–118, 119–140, 141–162, 163–184, 185–206, 207–224, and 225–246. The 8 X 22 AA approximate tandem repeats stretch occupies residues 75 to 246; sequence LLIEETMKEV…RLDDMRDQME (172 aa). An LDL and other lipoprotein receptors binding region spans residues 153–163; that stretch reads HLRKLRKRLLR. Residue 157-160 participates in heparin binding; it reads LRKR. The tract at residues 205–281 is lipid-binding and lipoprotein association; the sequence is AIPPSQQLRE…SWFEPLVQDM (77 aa). Residue 220-227 participates in heparin binding; that stretch reads GQKVRGRL. The interval 257 to 308 is homooligomerization; it reads SQVRLQAEAFQTRLKSWFEPLVQDMQRQWASLVEKVQSTLGISPSTKPSKTK. The segment at 269–281 is specificity for association with VLDL; that stretch reads RLKSWFEPLVQDM.

This sequence belongs to the apolipoprotein A1/A4/E family. In terms of assembly, homotetramer. May interact with ABCA1; functionally associated with ABCA1 in the biogenesis of HDLs. May interact with APP/A4 amyloid-beta peptide; the interaction is extremely stable in vitro but its physiological significance is unclear. May interact with MAPT. May interact with MAP2. In the cerebrospinal fluid, interacts with secreted SORL1. Interacts with PMEL; this allows the loading of PMEL luminal fragment on ILVs to induce fibril nucleation. Post-translationally, APOE exists as multiple glycosylated and sialylated glycoforms within cells and in plasma. The extent of glycosylation and sialylation are tissue and context specific. In terms of processing, glycated in plasma VLDL. Phosphorylated by FAM20C in the extracellular medium.

The protein resides in the secreted. The protein localises to the extracellular space. It is found in the extracellular matrix. It localises to the extracellular vesicle. Its subcellular location is the endosome. The protein resides in the multivesicular body. Its function is as follows. APOE is an apolipoprotein, a protein associating with lipid particles, that mainly functions in lipoprotein-mediated lipid transport between organs via the plasma and interstitial fluids. APOE is a core component of plasma lipoproteins and is involved in their production, conversion and clearance. Apolipoproteins are amphipathic molecules that interact both with lipids of the lipoprotein particle core and the aqueous environment of the plasma. As such, APOE associates with chylomicrons, chylomicron remnants, very low density lipoproteins (VLDL) and intermediate density lipoproteins (IDL) but shows a preferential binding to high-density lipoproteins (HDL). It also binds a wide range of cellular receptors including the LDL receptor/LDLR and the very low-density lipoprotein receptor/VLDLR that mediate the cellular uptake of the APOE-containing lipoprotein particles. Finally, APOE also has a heparin-binding activity and binds heparan-sulfate proteoglycans on the surface of cells, a property that supports the capture and the receptor-mediated uptake of APOE-containing lipoproteins by cells. In Pteropus pselaphon (Bonin flying fox), this protein is Apolipoprotein E (APOE).